We begin with the raw amino-acid sequence, 227 residues long: Cytochrome c oxidase subunit 2 (227 aa).

The Mitochondrial intermembrane portion of the chain corresponds to 1–14 (MAYPFELGFQDATS). A helical transmembrane segment spans residues 15–45 (PIMEELLHFHDHTLMIVFLISSLVLYIISLM). At 46–59 (LTTKLTHTSTMDAQ) the chain is on the mitochondrial matrix side. Residues 60–87 (EVETIWTILPAIILILIALPSLRILYMM) traverse the membrane as a helical segment. At 88–227 (DEINDPSLTV…HFENWSSSML (140 aa)) the chain is on the mitochondrial intermembrane side. H161, C196, E198, C200, H204, and M207 together coordinate Cu cation. E198 is a binding site for Mg(2+).

This sequence belongs to the cytochrome c oxidase subunit 2 family. In terms of assembly, component of the cytochrome c oxidase (complex IV, CIV), a multisubunit enzyme composed of 14 subunits. The complex is composed of a catalytic core of 3 subunits MT-CO1, MT-CO2 and MT-CO3, encoded in the mitochondrial DNA, and 11 supernumerary subunits COX4I, COX5A, COX5B, COX6A, COX6B, COX6C, COX7A, COX7B, COX7C, COX8 and NDUFA4, which are encoded in the nuclear genome. The complex exists as a monomer or a dimer and forms supercomplexes (SCs) in the inner mitochondrial membrane with NADH-ubiquinone oxidoreductase (complex I, CI) and ubiquinol-cytochrome c oxidoreductase (cytochrome b-c1 complex, complex III, CIII), resulting in different assemblies (supercomplex SCI(1)III(2)IV(1) and megacomplex MCI(2)III(2)IV(2)). Found in a complex with TMEM177, COA6, COX18, COX20, SCO1 and SCO2. Interacts with TMEM177 in a COX20-dependent manner. Interacts with COX20. Interacts with COX16. Cu cation is required as a cofactor.

Its subcellular location is the mitochondrion inner membrane. The enzyme catalyses 4 Fe(II)-[cytochrome c] + O2 + 8 H(+)(in) = 4 Fe(III)-[cytochrome c] + 2 H2O + 4 H(+)(out). Functionally, component of the cytochrome c oxidase, the last enzyme in the mitochondrial electron transport chain which drives oxidative phosphorylation. The respiratory chain contains 3 multisubunit complexes succinate dehydrogenase (complex II, CII), ubiquinol-cytochrome c oxidoreductase (cytochrome b-c1 complex, complex III, CIII) and cytochrome c oxidase (complex IV, CIV), that cooperate to transfer electrons derived from NADH and succinate to molecular oxygen, creating an electrochemical gradient over the inner membrane that drives transmembrane transport and the ATP synthase. Cytochrome c oxidase is the component of the respiratory chain that catalyzes the reduction of oxygen to water. Electrons originating from reduced cytochrome c in the intermembrane space (IMS) are transferred via the dinuclear copper A center (CU(A)) of subunit 2 and heme A of subunit 1 to the active site in subunit 1, a binuclear center (BNC) formed by heme A3 and copper B (CU(B)). The BNC reduces molecular oxygen to 2 water molecules using 4 electrons from cytochrome c in the IMS and 4 protons from the mitochondrial matrix. In Tamias merriami (Merriam's chipmunk), this protein is Cytochrome c oxidase subunit 2 (MT-CO2).